A 476-amino-acid polypeptide reads, in one-letter code: Monofunctional riboflavin biosynthesis protein RIBA 2, chloroplastic (476 aa).

The N-terminal 54 residues, 1–54, are a transit peptide targeting the chloroplast; sequence MASLTLRCDSTHLLPSRDVVKGTKPFGTSLVYPRIISKKFNVRMRVIPEEGDVF. The tract at residues 44–306 is DHBP synthase; that stretch reads MRVIPEEGDV…IADLIRYRRK (263 aa). Residues 130-131, Asp-135, 245-249, and Glu-269 each bind D-ribulose 5-phosphate; these read RE and RAGHT. Residue Glu-131 coordinates Mg(2+). His-248 contacts Mg(2+). An inactive GTP cyclohydrolase II region spans residues 307 to 476; that stretch reads RERLVEFTAV…SGKVPLITTP (170 aa). Residues 357–361, Gln-376, 399–401, and Thr-450 each bind GTP; these read RVHAE and ESK.

It in the N-terminal section; belongs to the DHBP synthase family. The protein in the C-terminal section; belongs to the GTP cyclohydrolase II family. Mg(2+) is required as a cofactor. Requires Mn(2+) as cofactor. Expressed in leaves, shoots, roots, flowers and siliques.

It is found in the plastid. Its subcellular location is the chloroplast. The enzyme catalyses D-ribulose 5-phosphate = (2S)-2-hydroxy-3-oxobutyl phosphate + formate + H(+). The protein operates within cofactor biosynthesis; riboflavin biosynthesis; 2-hydroxy-3-oxobutyl phosphate from D-ribulose 5-phosphate: step 1/1. Involved in riboflavin biosynthesis. Catalyzes the conversion of D-ribulose 5-phosphate to formate and 3,4-dihydroxy-2-butanone 4-phosphate. RIBA2 and RIBA3 together are not able to complement the loss of function of RIBA1. This chain is Monofunctional riboflavin biosynthesis protein RIBA 2, chloroplastic (RIBA2), found in Arabidopsis thaliana (Mouse-ear cress).